A 514-amino-acid chain; its full sequence is Maturase K (514 aa).

Belongs to the intron maturase 2 family. MatK subfamily.

The protein resides in the plastid. It localises to the chloroplast. Functionally, usually encoded in the trnK tRNA gene intron. Probably assists in splicing its own and other chloroplast group II introns. This Tsuga canadensis (Eastern hemlock) protein is Maturase K.